The primary structure comprises 1406 residues: DNA-directed RNA polymerase subunit beta' (1406 aa).

4 residues coordinate Zn(2+): Cys70, Cys72, Cys85, and Cys88. Mg(2+)-binding residues include Asp460, Asp462, and Asp464. Zn(2+) contacts are provided by Cys814, Cys889, Cys896, and Cys899.

It belongs to the RNA polymerase beta' chain family. In terms of assembly, the RNAP catalytic core consists of 2 alpha, 1 beta, 1 beta' and 1 omega subunit. When a sigma factor is associated with the core the holoenzyme is formed, which can initiate transcription. Mg(2+) is required as a cofactor. The cofactor is Zn(2+).

The enzyme catalyses RNA(n) + a ribonucleoside 5'-triphosphate = RNA(n+1) + diphosphate. Functionally, DNA-dependent RNA polymerase catalyzes the transcription of DNA into RNA using the four ribonucleoside triphosphates as substrates. This chain is DNA-directed RNA polymerase subunit beta', found in Stenotrophomonas maltophilia (strain K279a).